Reading from the N-terminus, the 175-residue chain is Rubredoxin-1 (175 aa).

Rubredoxin-like domains are found at residues 1 to 53 (MARY…FVLI) and 119 to 170 (FLKW…YVLY). Residues cysteine 6, cysteine 9, cysteine 39, cysteine 42, cysteine 124, cysteine 127, cysteine 157, and cysteine 160 each contribute to the Fe cation site.

It belongs to the rubredoxin family. Fe(3+) is required as a cofactor.

The protein resides in the cytoplasm. Its pathway is hydrocarbon metabolism; alkane degradation. Involved in the hydrocarbon hydroxylating system, which transfers electrons from NADH to rubredoxin reductase and then through rubredoxin to alkane 1 monooxygenase. This is Rubredoxin-1 (alkG) from Pseudomonas putida (Arthrobacter siderocapsulatus).